The chain runs to 323 residues: tRNA dimethylallyltransferase (323 aa).

Residue 16 to 23 (GPTASGKT) coordinates ATP. 18 to 23 (TASGKT) serves as a coordination point for substrate. Interaction with substrate tRNA stretches follow at residues 41–44 (DSAL), 165–169 (QRIQR), 253–258 (RCVGYR), and 286–293 (KRQITWLR).

Belongs to the IPP transferase family. In terms of assembly, monomer. Requires Mg(2+) as cofactor.

It carries out the reaction adenosine(37) in tRNA + dimethylallyl diphosphate = N(6)-dimethylallyladenosine(37) in tRNA + diphosphate. Catalyzes the transfer of a dimethylallyl group onto the adenine at position 37 in tRNAs that read codons beginning with uridine, leading to the formation of N6-(dimethylallyl)adenosine (i(6)A). This chain is tRNA dimethylallyltransferase, found in Ralstonia nicotianae (strain ATCC BAA-1114 / GMI1000) (Ralstonia solanacearum).